We begin with the raw amino-acid sequence, 433 residues long: Glutamate-1-semialdehyde 2,1-aminomutase (433 aa).

Lysine 273 bears the N6-(pyridoxal phosphate)lysine mark.

This sequence belongs to the class-III pyridoxal-phosphate-dependent aminotransferase family. HemL subfamily. Homodimer. Pyridoxal 5'-phosphate serves as cofactor.

Its subcellular location is the cytoplasm. The catalysed reaction is (S)-4-amino-5-oxopentanoate = 5-aminolevulinate. It participates in porphyrin-containing compound metabolism; protoporphyrin-IX biosynthesis; 5-aminolevulinate from L-glutamyl-tRNA(Glu): step 2/2. It functions in the pathway porphyrin-containing compound metabolism; chlorophyll biosynthesis. The sequence is that of Glutamate-1-semialdehyde 2,1-aminomutase from Microcystis aeruginosa (strain NIES-843 / IAM M-2473).